The sequence spans 72 residues: Large ribosomal subunit protein bL31 (72 aa).

Zn(2+) is bound by residues cysteine 16, cysteine 18, cysteine 38, and cysteine 41.

It belongs to the bacterial ribosomal protein bL31 family. Type A subfamily. Part of the 50S ribosomal subunit. Zn(2+) is required as a cofactor.

Binds the 23S rRNA. The polypeptide is Large ribosomal subunit protein bL31 (Francisella tularensis subsp. holarctica (strain LVS)).